Here is a 218-residue protein sequence, read N- to C-terminus: Adenylate kinase (218 aa).

ATP is bound at residue 10 to 15; that stretch reads GAGKGT. The tract at residues 30-59 is NMP; that stretch reads STGDMLRAAVKAGTPLGLQAKAVMDAGQLV. AMP is bound by residues Thr-31, Arg-36, 57–59, 85–88, and Gln-92; these read QLV and GFPR. Positions 122-159 are LID; sequence GRRSHPASGRTYHVKFNPPKVEGKDDVTGEPLVQREDD. Residues Arg-123 and 132-133 each bind ATP; that span reads TY. The tract at residues 127-150 is disordered; the sequence is PASGRTYHVKFNPPKVEGKDDVTG. AMP-binding residues include Arg-156 and Arg-167. Gly-203 provides a ligand contact to ATP.

It belongs to the adenylate kinase family. In terms of assembly, monomer.

The protein resides in the cytoplasm. The enzyme catalyses AMP + ATP = 2 ADP. Its pathway is purine metabolism; AMP biosynthesis via salvage pathway; AMP from ADP: step 1/1. Catalyzes the reversible transfer of the terminal phosphate group between ATP and AMP. Plays an important role in cellular energy homeostasis and in adenine nucleotide metabolism. This is Adenylate kinase from Acidovorax ebreus (strain TPSY) (Diaphorobacter sp. (strain TPSY)).